Reading from the N-terminus, the 91-residue chain is Small ribosomal subunit protein bS16 (91 aa).

This sequence belongs to the bacterial ribosomal protein bS16 family.

The chain is Small ribosomal subunit protein bS16 from Enterococcus faecalis (strain ATCC 700802 / V583).